We begin with the raw amino-acid sequence, 699 residues long: Ciliated left-right organizer metallopeptidase (699 aa).

The signal sequence occupies residues 1 to 18; the sequence is MKMWRLLLLGVATGRCLH. Topologically, residues 19–663 are extracellular; that stretch reads EETQKSVRLL…SLDHNPSMTE (645 aa). Histidine 238 lines the Zn(2+) pocket. Glutamate 239 is an active-site residue. Residues histidine 242 and histidine 318 each contribute to the Zn(2+) site. The chain crosses the membrane as a helical span at residues 664–684; it reads LLLSTGFCLLVLILVGALGTL. Topologically, residues 685–699 are cytoplasmic; that stretch reads AYQKRAMLQVAPSTT.

This sequence belongs to the peptidase M8 family. Zn(2+) serves as cofactor. Specifically expressed in ciliated left-right organizer.

The protein resides in the membrane. Putative metalloproteinase that plays a role in left-right patterning process. This chain is Ciliated left-right organizer metallopeptidase, found in Mus musculus (Mouse).